Consider the following 64-residue polypeptide: Translational regulator CsrA (64 aa).

Belongs to the CsrA/RsmA family. In terms of assembly, homodimer; the beta-strands of each monomer intercalate to form a hydrophobic core, while the alpha-helices form wings that extend away from the core.

It localises to the cytoplasm. A key translational regulator that binds mRNA to regulate translation initiation and/or mRNA stability. Mediates global changes in gene expression, shifting from rapid growth to stress survival by linking envelope stress, the stringent response and the catabolite repression systems. Usually binds in the 5'-UTR; binding at or near the Shine-Dalgarno sequence prevents ribosome-binding, repressing translation, binding elsewhere in the 5'-UTR can activate translation and/or stabilize the mRNA. Its function is antagonized by small RNA(s). The polypeptide is Translational regulator CsrA (Methylococcus capsulatus (strain ATCC 33009 / NCIMB 11132 / Bath)).